We begin with the raw amino-acid sequence, 182 residues long: Large ribosomal subunit protein uL6 (182 aa).

Belongs to the universal ribosomal protein uL6 family. Part of the 50S ribosomal subunit.

In terms of biological role, this protein binds to the 23S rRNA, and is important in its secondary structure. It is located near the subunit interface in the base of the L7/L12 stalk, and near the tRNA binding site of the peptidyltransferase center. The polypeptide is Large ribosomal subunit protein uL6 (Caldicellulosiruptor bescii (strain ATCC BAA-1888 / DSM 6725 / KCTC 15123 / Z-1320) (Anaerocellum thermophilum)).